Reading from the N-terminus, the 474-residue chain is DNA-binding protein (474 aa).

Positions Met1–Lys34 are disordered. Residue Tyr142 is modified to Phosphotyrosine; by host. Zn(2+) contacts are provided by Cys231 and His233. Positions Val244–Ile278 are flexible loop. Cys286, Cys302, Cys343, Cys345, Cys397, and Cys413 together coordinate Zn(2+). Residues Val460–Phe474 are C-terminal arm, DBP binding.

The protein belongs to the adenoviridae E2A DNA-binding protein family. As to quaternary structure, homomultimerizes on viral ssDNA bound to pTP. Forms a initiation complex with viral polymerase, pTP and hosts NFIA and POU2F1/OCT1. Interacts with host SRCAP.

Its subcellular location is the host nucleus. Functionally, plays a role in the elongation phase of viral strand displacement replication by unwinding the template in an ATP-independent fashion, employing its capacity to form multimers. Also enhances the rate of initiation. Released from template upon second strand synthesis. Assembles in complex with viral pTP, viral pol, host NFIA and host POU2F1/OCT1 on viral origin of replication. Covers the whole ssDNA genome during synthesis. The complementary strand synthesis induces its relese from DNA template. May inhibit cellular transcription mediated by the interaction between host SRCAP and CBP. The protein is DNA-binding protein of Homo sapiens (Human).